A 67-amino-acid chain; its full sequence is WPPVEDRPCCERCTACTLMLPDEANTCVCGDIVPKCHQGCSLCERVDTPSGYQCKSFEYYNCGTKCP.

Intrachain disulfides connect C9–C66, C10–C29, C13–C62, C16–C27, C36–C43, and C40–C54.

This sequence belongs to the Bowman-Birk serine protease inhibitor family. As to expression, expressed in bulb (at protein level).

Its function is as follows. Serine protease inhibitor. Strongly inhibits trypsin (Ki = 4 nM) and elastase (Ki = 4.8 nM). Also inhibits chymotrypsin with a Ki of 22 nM. Does not inhibit bacterial subtilisin. In Hyacinthus orientalis (Common hyacinth), this protein is Bowman-Birk type proteinase inhibitor A6.